The chain runs to 183 residues: Negative modulator of initiation of replication (183 aa).

Residues 43-70 (VNDTQPVSAPAPSKAAPSAGNESRPQDR) form a disordered region. Positions 50-61 (SAPAPSKAAPSA) are enriched in low complexity. Interaction with DNA stretches follow at residues 89–90 (AV), 118–122 (RTRIY), and 152–158 (NTNTGRK).

It belongs to the SeqA family. In terms of assembly, homodimer. Polymerizes to form helical filaments.

The protein localises to the cytoplasm. In terms of biological role, negative regulator of replication initiation, which contributes to regulation of DNA replication and ensures that replication initiation occurs exactly once per chromosome per cell cycle. Binds to pairs of hemimethylated GATC sequences in the oriC region, thus preventing assembly of replication proteins and re-initiation at newly replicated origins. Repression is relieved when the region becomes fully methylated. The polypeptide is Negative modulator of initiation of replication (Pantoea ananatis (strain AJ13355)).